A 1218-amino-acid chain; its full sequence is Protein jagged-1 (1218 aa).

A signal peptide spans 1-33 (MRSPRTRGRSGRPLSLLLALLCALRAKVCGASG). The Extracellular portion of the chain corresponds to 34-1067 (QFELEILSMQ…QRRPLKNRTD (1034 aa)). The N-linked (GlcNAc...) asparagine glycan is linked to Asn143. The DSL domain occupies 185-229 (VTCDDYYYGFGCNKFCRPRDDFFGHYACDQNGNKTCMEGWMGPEC). 2 disulfide bridges follow: Cys187–Cys196 and Cys200–Cys212. An important for interaction with NOTCH1 region spans residues 199–207 (FCRPRDDFF). An N-linked (GlcNAc...) asparagine glycan is attached at Asn217. Cystine bridges form between Cys220/Cys229, Cys234/Cys245, Cys238/Cys251, Cys253/Cys262, Cys265/Cys276, Cys271/Cys282, Cys284/Cys293, Cys300/Cys312, Cys306/Cys322, Cys324/Cys333, Cys340/Cys351, Cys345/Cys360, Cys362/Cys371, Cys378/Cys389, Cys383/Cys398, Cys400/Cys409, Cys416/Cys427, Cys421/Cys436, Cys438/Cys447, Cys454/Cys464, Cys458/Cys473, Cys475/Cys484, Cys491/Cys502, Cys496/Cys511, Cys513/Cys522, Cys529/Cys540, Cys534/Cys549, Cys551/Cys560, Cys578/Cys605, Cys599/Cys615, Cys617/Cys626, Cys633/Cys644, Cys638/Cys653, Cys655/Cys664, Cys671/Cys682, Cys676/Cys691, Cys693/Cys702, Cys709/Cys720, Cys714/Cys729, and Cys731/Cys740. Residues 230-263 (NRAICRQGCSPKHGSCKLPGDCRCQYGWQGLYCD) form the EGF-like 1 domain. One can recognise an EGF-like 2; atypical domain in the interval 264 to 294 (KCIPHPGCVHGICNEPWQCLCETNWGGQLCD). EGF-like domains are found at residues 296-334 (DLNYCGTHQPCLNGGTCSNTGPDKYQCSCPEGYSGPNCE) and 336-372 (AEHACLSDPCHNRGSCKETSLGFECECSPGWTGPTCS). Residues 374 to 410 (NIDDCSPNNCSHGGTCQDLVNGFKCVCPPQWTGKTCQ) enclose the EGF-like 5; calcium-binding domain. N-linked (GlcNAc...) asparagine glycosylation is present at Asn382. One can recognise an EGF-like 6; calcium-binding domain in the interval 412–448 (DANECEAKPCVNAKSCKNLIASYYCDCLPGWMGQNCD). In terms of domain architecture, EGF-like 7; calcium-binding spans 450-485 (NINDCLGQCQNDASCRDLVNGYRCICPPGYAGDHCE). The 37-residue stretch at 487-523 (DIDECASNPCLNGGHCQNEINRFQCLCPTGFSGNLCQ) folds into the EGF-like 8; calcium-binding domain. EGF-like domains lie at 525-561 (DIDYCEPNPCQNGAQCYNRASDYFCKCPEDYEGKNCS) and 586-627 (DTPE…TYCH). Residue Asn559 is glycosylated (N-linked (GlcNAc...) asparagine). The EGF-like 11; calcium-binding domain occupies 629–665 (NINDCESNPCRNGGTCIDGVNSYKCICSDGWEGAYCE). Positions 667-703 (NINDCSQNPCHNGGTCRDLVNDFYCDCKNGWKGKTCH) constitute an EGF-like 12; calcium-binding domain. 2 consecutive EGF-like domains span residues 705 to 741 (RDSQCDEATCNNGGTCYDEGDAFKCMCPGGWEGTTCN) and 744 to 780 (RNSSCLPNPCHNGGTCVVNGESFTCVCKEGWEGPICA). N-linked (GlcNAc...) asparagine glycosylation is present at Asn745. Intrachain disulfides connect Cys748–Cys759, Cys753–Cys768, Cys770–Cys779, Cys786–Cys797, Cys791–Cys806, Cys808–Cys817, Cys824–Cys835, Cys829–Cys844, and Cys846–Cys855. One can recognise an EGF-like 15; calcium-binding domain in the interval 782-818 (NTNDCSPHPCYNSGTCVDGDNWYRCECAPGFAGPDCR). Residues 820-856 (NINECQSSPCAFGATCVDEINGYRCVCPPGHSGAKCQ) form the EGF-like 16; calcium-binding domain. 4 N-linked (GlcNAc...) asparagine glycosylation sites follow: Asn960, Asn991, Asn1045, and Asn1064. Residues 1068-1093 (FLVPLLSSVLTVAWICCLVTAFYWCL) traverse the membrane as a helical segment. At 1094–1218 (RKRRKPGSHT…QSLNRMEYIV (125 aa)) the chain is on the cytoplasmic side. The interval 1152–1218 (HNSEVEEDDM…QSLNRMEYIV (67 aa)) is disordered. The span at 1189-1199 (TPTKHPNWTNK) shows a compositional bias: polar residues.

In terms of assembly, interacts with NOTCH2 and NOTCH3. Interacts with NOTCH1 (in the presence of calcium ions). Widely expressed in adult and fetal tissues. In cervix epithelium expressed in undifferentiated subcolumnar reserve cells and squamous metaplasia. Expression is up-regulated in cervical squamous cell carcinoma. Expressed in bone marrow cell line HS-27a which supports the long-term maintenance of immature progenitor cells.

The protein localises to the membrane. It is found in the cell membrane. In terms of biological role, ligand for multiple Notch receptors and involved in the mediation of Notch signaling. May be involved in cell-fate decisions during hematopoiesis. Seems to be involved in early and late stages of mammalian cardiovascular development. Inhibits myoblast differentiation. Enhances fibroblast growth factor-induced angiogenesis (in vitro). The sequence is that of Protein jagged-1 (JAG1) from Homo sapiens (Human).